An 88-amino-acid polypeptide reads, in one-letter code: Small ribosomal subunit protein bS16 (88 aa).

The protein belongs to the bacterial ribosomal protein bS16 family.

The sequence is that of Small ribosomal subunit protein bS16 from Buchnera aphidicola subsp. Cinara cedri (strain Cc).